A 329-amino-acid chain; its full sequence is UDP-N-acetylenolpyruvoylglucosamine reductase (329 aa).

An FAD-binding PCMH-type domain is found at 28 to 192 (RVGGPADLLC…ARVEVRLRPG (165 aa)). Residue arginine 172 is part of the active site. Residues 204-225 (DRERRRATQPLDRPTFGSTFTN) form a disordered region. The active-site Proton donor is the serine 221. The active site involves glutamate 291. The disordered stretch occupies residues 303 to 329 (LAGLDGHAADGGGPGAASGGARPREAT). Gly residues predominate over residues 311 to 320 (ADGGGPGAAS).

It belongs to the MurB family. FAD is required as a cofactor.

It is found in the cytoplasm. The catalysed reaction is UDP-N-acetyl-alpha-D-muramate + NADP(+) = UDP-N-acetyl-3-O-(1-carboxyvinyl)-alpha-D-glucosamine + NADPH + H(+). The protein operates within cell wall biogenesis; peptidoglycan biosynthesis. Cell wall formation. The sequence is that of UDP-N-acetylenolpyruvoylglucosamine reductase from Anaeromyxobacter dehalogenans (strain 2CP-C).